Reading from the N-terminus, the 262-residue chain is Acyl-[acyl-carrier-protein]--UDP-N-acetylglucosamine O-acyltransferase (262 aa).

It belongs to the transferase hexapeptide repeat family. LpxA subfamily. Homotrimer.

The protein resides in the cytoplasm. It carries out the reaction a (3R)-hydroxyacyl-[ACP] + UDP-N-acetyl-alpha-D-glucosamine = a UDP-3-O-[(3R)-3-hydroxyacyl]-N-acetyl-alpha-D-glucosamine + holo-[ACP]. Its pathway is glycolipid biosynthesis; lipid IV(A) biosynthesis; lipid IV(A) from (3R)-3-hydroxytetradecanoyl-[acyl-carrier-protein] and UDP-N-acetyl-alpha-D-glucosamine: step 1/6. In terms of biological role, involved in the biosynthesis of lipid A, a phosphorylated glycolipid that anchors the lipopolysaccharide to the outer membrane of the cell. The chain is Acyl-[acyl-carrier-protein]--UDP-N-acetylglucosamine O-acyltransferase from Escherichia coli O157:H7.